A 68-amino-acid polypeptide reads, in one-letter code: Neuronal regeneration-related protein (68 aa).

The chain is Neuronal regeneration-related protein (NREP) from Gallus gallus (Chicken).